Reading from the N-terminus, the 312-residue chain is tRNA uridine(34) hydroxylase (312 aa).

The Rhodanese domain maps to 124 to 218 (SDPEVLLIDT…YLEEVPEQES (95 aa)). C178 serves as the catalytic Cysteine persulfide intermediate. The disordered stretch occupies residues 293-312 (AKARNQPHPIGRNYRLPSEA).

This sequence belongs to the TrhO family.

The enzyme catalyses uridine(34) in tRNA + AH2 + O2 = 5-hydroxyuridine(34) in tRNA + A + H2O. In terms of biological role, catalyzes oxygen-dependent 5-hydroxyuridine (ho5U) modification at position 34 in tRNAs. The sequence is that of tRNA uridine(34) hydroxylase from Pseudomonas syringae pv. syringae (strain B728a).